The sequence spans 347 residues: Uroporphyrinogen decarboxylase (347 aa).

Substrate is bound by residues 23–27 (RQAGR), Asp-73, Tyr-150, Thr-205, and His-323.

This sequence belongs to the uroporphyrinogen decarboxylase family. As to quaternary structure, homodimer.

Its subcellular location is the cytoplasm. The catalysed reaction is uroporphyrinogen III + 4 H(+) = coproporphyrinogen III + 4 CO2. Its pathway is porphyrin-containing compound metabolism; protoporphyrin-IX biosynthesis; coproporphyrinogen-III from 5-aminolevulinate: step 4/4. Its function is as follows. Catalyzes the decarboxylation of four acetate groups of uroporphyrinogen-III to yield coproporphyrinogen-III. This chain is Uroporphyrinogen decarboxylase, found in Ruthia magnifica subsp. Calyptogena magnifica.